We begin with the raw amino-acid sequence, 1064 residues long: Ribosome quality control complex subunit NEMF (1064 aa).

A Phosphothreonine modification is found at T7. A coiled-coil region spans residues 296–359 (VDEFYSKIEG…LIEMNLQIVD (64 aa)). S417 bears the Phosphoserine mark. The interval 420 to 451 (EDGDGDASIENSDAEAPKGKKKKQKNKQLQKP) is disordered. A compositionally biased stretch (basic residues) spans 438–447 (GKKKKQKNKQ). Residues 481-512 (AAKKTQRTVEAAEKAFKSAEKKTKQTLKEVQT) are a coiled coil. Positions 694 to 707 (EQLEGGDSSEEETE) are enriched in acidic residues. Disordered regions lie at residues 694 to 718 (EQLE…DVEL) and 731 to 973 (SGRD…SLTG). The segment covering 731–756 (SGRDELSSEDGEAKAVTKDQEPIGEM) has biased composition (basic and acidic residues). Residue S737 is modified to Phosphoserine. Polar residues predominate over residues 771 to 781 (IDLSHLQSQRP). Over residues 828-839 (IEEKDKERESAV) the composition is skewed to basic and acidic residues. The stretch at 858 to 882 (KRGQKSKMKKMKEKYKDQDDEDREL) forms a coiled coil. Over residues 859–870 (RGQKSKMKKMKE) the composition is skewed to basic residues. The span at 947-959 (DDPHDDKEEHDLD) shows a compositional bias: basic and acidic residues. Over residues 960–973 (QQGNEENLFDSLTG) the composition is skewed to polar residues.

Belongs to the NEMF family. As to quaternary structure, component of the ribosome quality control complex (RQC), composed of the E3 ubiquitin ligase LTN1, TCF25 and NEMF associated with the 60S ribosomal subunit. The complex probably also contains VCP/p97 and its ubiquitin-binding cofactors. Interacts (via its N-terminus) with XPO1.

The protein localises to the cytoplasm. It is found in the cytosol. Its subcellular location is the nucleus. Functionally, key component of the ribosome quality control complex (RQC), a ribosome-associated complex that mediates the extraction of incompletely synthesized nascent chains from stalled ribosomes as well as their ubiquitin-mediated proteasomal degradation. Thereby, frees 60S subunit ribosomes from the stalled translation complex and prevents the accumulation of nascent polypeptide chains that are potentially toxic for the cell. Within the RQC complex, NEMF specifically binds stalled 60S ribosomal subunits by recognizing an exposed, nascent chain-conjugated tRNA moiety and promotes the recruitment of LTN1 to stalled 60S subunits. Following binding to stalled 60S ribosomal subunits, NEMF mediates CAT tailing by recruiting alanine-charged tRNA to the A-site and directing the elongation of stalled nascent chains independently of mRNA or 40S subunits, leading to non-templated C-terminal alanine extensions (CAT tails). Mainly recruits alanine-charged tRNAs, but can also other amino acid-charged tRNAs. CAT tailing is required to promote ubiquitination of stalled nascent chains by different E3 ubiquitin-protein ligases. In the canonical RQC pathway (RQC-L), CAT tailing facilitates LTN1-dependent ubiquitination by exposing lysine residues that would otherwise remain buried in the ribosomal exit tunnel. In the alternative RQC pathway (RQC-C) CAT tailing creates an C-degron mainly composed of alanine that is recognized by the CRL2(KLHDC10) and RCHY1/PIRH2 E3 ligases, leading to ubiquitination and degradation of stalled nascent chains. NEMF may also indirectly play a role in nuclear export. In Mus musculus (Mouse), this protein is Ribosome quality control complex subunit NEMF.